A 524-amino-acid polypeptide reads, in one-letter code: General transcription factor IIF subunit 1 (524 aa).

Disordered stretches follow at residues 56–76 and 181–462; these read MYQE…RKQR and RLKD…IQLT. Residues 242–257 are compositionally biased toward basic residues; sequence KPQKKVPAKGGKKKKR. The segment covering 262 to 289 has biased composition (acidic residues); the sequence is EALEDSDDGDFEGQEVDYMSDESSSDEE. Residues 290-307 are compositionally biased toward basic and acidic residues; it reads LPGKIKPAKEEEGPKGLD. 2 stretches are compositionally biased toward acidic residues: residues 308 to 327 and 347 to 358; these read EQSE…EEGE and SDESETSEDSDI. The segment covering 368 to 378 has biased composition (basic residues); it reads QKKKTPPKKDK. Residues 381–397 are compositionally biased toward low complexity; sequence GSNSSSRGNSRPGTPSP. Residues 436–459 are compositionally biased toward polar residues; that stretch reads PQNTSGKSTPQPQSGKSTPSSGDI.

Belongs to the TFIIF alpha subunit family. Heterodimer of an alpha and a beta subunit. Phosphorylated on Ser and other residues by TAF1 and casein kinase II-like kinases.

Its subcellular location is the nucleus. In terms of biological role, TFIIF is a general transcription initiation factor that binds to RNA polymerase II and helps to recruit it to the initiation complex in collaboration with TFIIB. It promotes transcription elongation. The sequence is that of General transcription factor IIF subunit 1 (gtf2f1) from Xenopus laevis (African clawed frog).